Here is a 295-residue protein sequence, read N- to C-terminus: Zinc finger C2H2 protein ECU08_0560 (295 aa).

2 consecutive C2H2-type zinc fingers follow at residues 219-243 (FVCTYNDCKRAFKRYEHLKRHNLMH) and 249-273 (HKCRFPGCSKAFSRSDNLSQHYKVH).

The protein is Zinc finger C2H2 protein ECU08_0560 of Encephalitozoon cuniculi (strain GB-M1) (Microsporidian parasite).